A 324-amino-acid polypeptide reads, in one-letter code: RING-H2 finger protein ATL3 (324 aa).

Residues Ile24–Leu44 form a helical membrane-spanning segment. The RING-type; atypical zinc-finger motif lies at Cys127–Arg169. Disordered regions lie at residues Ser179–Ser210, Val226–Ser248, and Arg299–Pro324. 2 stretches are compositionally biased toward polar residues: residues Asn192–Ser210 and Val226–Thr235. The span at Ser306–Pro324 shows a compositional bias: low complexity.

This sequence belongs to the RING-type zinc finger family. ATL subfamily.

The protein resides in the membrane. It catalyses the reaction S-ubiquitinyl-[E2 ubiquitin-conjugating enzyme]-L-cysteine + [acceptor protein]-L-lysine = [E2 ubiquitin-conjugating enzyme]-L-cysteine + N(6)-ubiquitinyl-[acceptor protein]-L-lysine.. It participates in protein modification; protein ubiquitination. The sequence is that of RING-H2 finger protein ATL3 (ATL3) from Arabidopsis thaliana (Mouse-ear cress).